Here is an 841-residue protein sequence, read N- to C-terminus: DNA ligase (841 aa).

Residues 33–37, 82–83, and Glu-114 contribute to the NAD(+) site; these read DAQYD and SL. The N6-AMP-lysine intermediate role is filled by Lys-116. Positions 137, 174, 300, and 324 each coordinate NAD(+). Zn(2+)-binding residues include Cys-418, Cys-421, Cys-436, and Cys-442. The BRCT domain maps to 758–841; it reads EKTGPLDGQT…AFLGEHGQQR (84 aa).

Belongs to the NAD-dependent DNA ligase family. LigA subfamily. The cofactor is Mg(2+). Mn(2+) serves as cofactor.

It carries out the reaction NAD(+) + (deoxyribonucleotide)n-3'-hydroxyl + 5'-phospho-(deoxyribonucleotide)m = (deoxyribonucleotide)n+m + AMP + beta-nicotinamide D-nucleotide.. In terms of biological role, DNA ligase that catalyzes the formation of phosphodiester linkages between 5'-phosphoryl and 3'-hydroxyl groups in double-stranded DNA using NAD as a coenzyme and as the energy source for the reaction. It is essential for DNA replication and repair of damaged DNA. In Xanthomonas oryzae pv. oryzae (strain KACC10331 / KXO85), this protein is DNA ligase.